The primary structure comprises 380 residues: Cytochrome b (380 aa).

Transmembrane regions (helical) follow at residues 33 to 53 (FGSL…FLAM), 77 to 98 (WLIR…FLHV), 113 to 133 (WNMG…GYVL), and 178 to 198 (FFAF…VHLL). Positions 83 and 97 each coordinate heme b. 2 residues coordinate heme b: His182 and His196. Residue His201 participates in a ubiquinone binding. The next 4 helical transmembrane spans lie at 226-246 (IKDF…VLFF), 288-308 (LGGV…PLLH), 320-340 (ITQT…WIGG), and 347-367 (FIMI…IFMP).

The protein belongs to the cytochrome b family. In terms of assembly, the cytochrome bc1 complex contains 11 subunits: 3 respiratory subunits (MT-CYB, CYC1 and UQCRFS1), 2 core proteins (UQCRC1 and UQCRC2) and 6 low-molecular weight proteins (UQCRH/QCR6, UQCRB/QCR7, UQCRQ/QCR8, UQCR10/QCR9, UQCR11/QCR10 and a cleavage product of UQCRFS1). This cytochrome bc1 complex then forms a dimer. Requires heme b as cofactor.

It localises to the mitochondrion inner membrane. In terms of biological role, component of the ubiquinol-cytochrome c reductase complex (complex III or cytochrome b-c1 complex) that is part of the mitochondrial respiratory chain. The b-c1 complex mediates electron transfer from ubiquinol to cytochrome c. Contributes to the generation of a proton gradient across the mitochondrial membrane that is then used for ATP synthesis. This Chionomys roberti (Robert's snow vole) protein is Cytochrome b (MT-CYB).